The chain runs to 544 residues: 4-coumarate--CoA ligase 2 (544 aa).

Positions 190, 191, 192, 193, 194, and 198 each coordinate ATP. Residue tyrosine 240 participates in (E)-4-coumaroyl-AMP binding. Lysine 261 lines the CoA pocket. Positions 263 to 332 (DIVPFLELIQ…AKFPNAKLGQ (70 aa)) are SBD1. 5 residues coordinate (E)-4-coumaroyl-AMP: alanine 310, glutamine 332, glycine 333, threonine 337, and methionine 345. Positions 332, 333, and 337 each coordinate ATP. The tract at residues 333-400 (GYGMTEAGPV…IRGDQIMKGY (68 aa)) is SBD2. The ATP site is built by aspartate 421 and arginine 436. 2 residues coordinate (E)-4-coumaroyl-AMP: lysine 438 and lysine 442. Residues lysine 444 and glycine 445 each coordinate CoA. An ATP-binding site is contributed by lysine 527.

Belongs to the ATP-dependent AMP-binding enzyme family. The cofactor is Mg(2+).

It carries out the reaction (E)-4-coumarate + ATP + CoA = (E)-4-coumaroyl-CoA + AMP + diphosphate. The catalysed reaction is (E)-4-coumarate + ATP + H(+) = (E)-4-coumaroyl-AMP + diphosphate. It catalyses the reaction (E)-4-coumaroyl-AMP + CoA = (E)-4-coumaroyl-CoA + AMP + H(+). Its pathway is phytoalexin biosynthesis; 3,4',5-trihydroxystilbene biosynthesis; 3,4',5-trihydroxystilbene from trans-4-coumarate: step 1/2. Its function is as follows. Carboxylate--CoA ligase that may use 4-coumarate as substrate. Follows a two-step reaction mechanism, wherein the carboxylate substrate first undergoes adenylation by ATP, followed by a thioesterification in the presence of CoA to yield the final CoA thioester. The sequence is that of 4-coumarate--CoA ligase 2 (4CL2) from Petroselinum crispum (Parsley).